We begin with the raw amino-acid sequence, 459 residues long: Cysteine--tRNA ligase (459 aa).

Zn(2+) is bound at residue Cys-27. Residues 29-39 (VTVYDDCHIGH) carry the 'HIGH' region motif. Zn(2+) is bound by residues Cys-208, His-233, and Glu-237. The 'KMSKS' region signature appears at 265 to 269 (KMSKS). Lys-268 serves as a coordination point for ATP.

The protein belongs to the class-I aminoacyl-tRNA synthetase family. As to quaternary structure, monomer. Requires Zn(2+) as cofactor.

It localises to the cytoplasm. The catalysed reaction is tRNA(Cys) + L-cysteine + ATP = L-cysteinyl-tRNA(Cys) + AMP + diphosphate. This chain is Cysteine--tRNA ligase, found in Francisella tularensis subsp. novicida (strain U112).